The chain runs to 490 residues: MSKLTDLTMAEARDGLAKGAFTAVELTDAHIKATEAQRHLNAFIVETPDLALEAAKASDARRQAGTAGSMDGLPIGIKDLFCTEGVQTTAASHILEGFKPPYESTVSGKLKAAGAISLGKLNLDEFAMGSSNQTSYFGAVENPWKKTSDPKAKLVPGGSSGGSAAAVAARMVLGATGTDTGGSIRQPAAFCGITGIKPTYGRCSRFGIVAFASSLDQAGPMARTVRDCAIMLGAMAGHDPKDSTSVNMAVPDFERALTGDIRGLKVGIPKEYRPDGLSDEVAKVWDRGIEWLKAAGATPVEISLPHTKYALATYYIIAPAECSSNLARYDGLRYGLRVPGKTLDDMYKKSRAAGFGAEVRRRILIGTYVLSAGYYDAYYAKAQKVRRLIAEDFRKAFETVDVILTPTAPSAAFGMGEGTDDPVTMWLNDVFTIPTSMAGLPGLSLPAGLSADGLPLGLQLIGRPFDEETVFRVAGVMETAANFTAKPEGV.

Catalysis depends on charge relay system residues lysine 78 and serine 159. The active-site Acyl-ester intermediate is the serine 183.

It belongs to the amidase family. GatA subfamily. Heterotrimer of A, B and C subunits.

It catalyses the reaction L-glutamyl-tRNA(Gln) + L-glutamine + ATP + H2O = L-glutaminyl-tRNA(Gln) + L-glutamate + ADP + phosphate + H(+). Functionally, allows the formation of correctly charged Gln-tRNA(Gln) through the transamidation of misacylated Glu-tRNA(Gln) in organisms which lack glutaminyl-tRNA synthetase. The reaction takes place in the presence of glutamine and ATP through an activated gamma-phospho-Glu-tRNA(Gln). This Paramagnetospirillum magneticum (strain ATCC 700264 / AMB-1) (Magnetospirillum magneticum) protein is Glutamyl-tRNA(Gln) amidotransferase subunit A.